We begin with the raw amino-acid sequence, 450 residues long: Glucose-6-phosphate isomerase (450 aa).

The Proton donor role is filled by glutamate 290. Active-site residues include histidine 311 and lysine 425.

The protein belongs to the GPI family.

It is found in the cytoplasm. The catalysed reaction is alpha-D-glucose 6-phosphate = beta-D-fructose 6-phosphate. It functions in the pathway carbohydrate biosynthesis; gluconeogenesis. The protein operates within carbohydrate degradation; glycolysis; D-glyceraldehyde 3-phosphate and glycerone phosphate from D-glucose: step 2/4. Catalyzes the reversible isomerization of glucose-6-phosphate to fructose-6-phosphate. This Leuconostoc mesenteroides subsp. mesenteroides (strain ATCC 8293 / DSM 20343 / BCRC 11652 / CCM 1803 / JCM 6124 / NCDO 523 / NBRC 100496 / NCIMB 8023 / NCTC 12954 / NRRL B-1118 / 37Y) protein is Glucose-6-phosphate isomerase.